The primary structure comprises 177 residues: Matrix protein (177 aa).

In terms of assembly, homomultimer. Interacts with nucleoprotein and with the cytoplasmic domain of glycoprotein.

It is found in the virion membrane. The protein resides in the host endomembrane system. Plays a major role in assembly and budding of virion. Completely covers the ribonucleoprotein coil and keep it in condensed bullet-shaped form. Inhibits viral transcription and stimulates replication. The chain is Matrix protein (M) from Lettuce necrotic yellows virus (isolate 318) (LNYV).